Here is a 174-residue protein sequence, read N- to C-terminus: Phospholipase A2-like protein Y52B11A.8 (174 aa).

The signal sequence occupies residues 1–18 (MRGLLVATWIFVSVAASA). Residues asparagine 49 and asparagine 143 are each glycosylated (N-linked (GlcNAc...) asparagine). A disordered region spans residues 137–174 (YEASGPNASTTEESPAEKDDYDYESHVAGLNATPSSST).

It belongs to the phospholipase A2 family.

The protein resides in the secreted. This Caenorhabditis elegans protein is Phospholipase A2-like protein Y52B11A.8.